Here is a 316-residue protein sequence, read N- to C-terminus: Adenine deaminase (316 aa).

H14, H16, and H194 together coordinate Zn(2+). E197 functions as the Proton donor in the catalytic mechanism. D275 is a Zn(2+) binding site. D276 is a substrate binding site.

This sequence belongs to the metallo-dependent hydrolases superfamily. Adenosine and AMP deaminases family. Adenine deaminase type 2 subfamily. The cofactor is Zn(2+).

The catalysed reaction is adenine + H2O + H(+) = hypoxanthine + NH4(+). Its function is as follows. Catalyzes the hydrolytic deamination of adenine to hypoxanthine. Plays an important role in the purine salvage pathway and in nitrogen catabolism. The sequence is that of Adenine deaminase from Pseudomonas aeruginosa (strain UCBPP-PA14).